Here is an 878-residue protein sequence, read N- to C-terminus: Phosphoenolpyruvate carboxylase (878 aa).

Active-site residues include His138 and Lys545.

Belongs to the PEPCase type 1 family. The cofactor is Mg(2+).

It catalyses the reaction oxaloacetate + phosphate = phosphoenolpyruvate + hydrogencarbonate. Its function is as follows. Forms oxaloacetate, a four-carbon dicarboxylic acid source for the tricarboxylic acid cycle. In Shewanella sediminis (strain HAW-EB3), this protein is Phosphoenolpyruvate carboxylase.